The primary structure comprises 322 residues: uncharacterized protein (322 aa).

8 helical membrane passes run 7 to 27 (IQKI…IGAI), 54 to 74 (AFAL…LAMF), 87 to 107 (FVGF…LSGS), 128 to 148 (IAFC…ITFV), 162 to 182 (FLSV…YLLI), 209 to 229 (IGLT…LLPG), 249 to 269 (GIIS…LFLL), and 287 to 307 (VIYY…FELL).

It to E.coli YbhN.

It localises to the cell membrane. This is an uncharacterized protein from Synechocystis sp. (strain ATCC 27184 / PCC 6803 / Kazusa).